Consider the following 508-residue polypeptide: Acyl-CoA-binding domain-containing protein 5 (508 aa).

An ACB domain is found at 44–133; it reads YETRFEAAVK…MKKIIETMPM (90 aa). An acyl-CoA is bound by residues 55–64, 75–79, Lys101, and Tyr120; these read IQSLPKNGSF and YSFYK. The tract at residues 175–215 is disordered; that stretch reads AKAVNGKAESSDSGAESEEEEAQEELKGAEQSGSDDKKTLK. The stretch at 181–214 forms a coiled coil; it reads KAESSDSGAESEEEEAQEELKGAEQSGSDDKKTL. 6 positions are modified to phosphoserine: Ser184, Ser185, Ser187, Ser191, Ser206, and Ser233. Positions 198–215 are enriched in basic and acidic residues; that stretch reads EELKGAEQSGSDDKKTLK. Residues 240–260 are compositionally biased toward basic and acidic residues; that stretch reads SDIHTDSSRSTRSSEDEKPGD. The disordered stretch occupies residues 240–300; it reads SDIHTDSSRS…LTSDSDSEVY (61 aa). Phosphoserine is present on Ser303. 2 disordered regions span residues 318 to 340 and 353 to 419; these read PTQH…NGSI and EVKH…RGSR. Basic and acidic residues predominate over residues 353–376; it reads EVKHGGEDGRSSSGAPHRETRGGE. The residue at position 405 (Ser405) is a Phosphoserine. Residues 408 to 418 show a composition bias toward basic and acidic residues; it reads DGERWGSDRGS. A coiled-coil region spans residues 428-453; it reads LVLIRLQEDMQNVLQRLHKLETLTAS. Lys446 bears the N6-acetyllysine mark. A helical membrane pass occupies residues 480–500; that stretch reads GALAFAIIWPFIAQWLAHLYY.

Belongs to the ATG37 family.

Its subcellular location is the peroxisome membrane. Functionally, acyl-CoA binding protein which acts as the peroxisome receptor for pexophagy but is dispensable for aggrephagy and nonselective autophagy. Binds medium- and long-chain acyl-CoA esters. This chain is Acyl-CoA-binding domain-containing protein 5 (Acbd5), found in Mus musculus (Mouse).